The chain runs to 86 residues: Probable weak neurotoxin NNAM2I (86 aa).

Positions 1–21 (MKTLPLTLVVVTIVCLDLGYT) are cleaved as a signal peptide. 5 cysteine pairs are disulfide-bonded: Cys-24–Cys-45, Cys-27–Cys-32, Cys-38–Cys-63, Cys-67–Cys-78, and Cys-79–Cys-84.

The protein belongs to the three-finger toxin family. Ancestral subfamily. Orphan group II sub-subfamily. Expressed by the venom gland.

The protein resides in the secreted. Functionally, binds with low affinity to muscular (alpha-1-beta-1-delta-epsilon/CHRNA1-CHRNB1-CHRND-CHRNE) and very low affinity to neuronal (alpha-7/CHRNA7) nicotinic acetylcholine receptor (nAChR). The chain is Probable weak neurotoxin NNAM2I from Naja atra (Chinese cobra).